Here is a 533-residue protein sequence, read N- to C-terminus: uncharacterized protein (533 aa).

The next 5 membrane-spanning stretches (helical) occupy residues 4 to 23 (FLAANPLIALVVILAVGLAI), 28 to 47 (VFGLSLGAAAVLFVALVVST), 57 to 79 (IVYQLGLAMFVYVIGLSAGPAFF), 86 to 108 (GWKLTIFMLLLLATLIGLAWVLI), and 151 to 173 (VIGYSLAYPGAVLGSIVVAAVGA). The region spanning 263–347 (LGEERETKIE…VAEVRRFLGD (85 aa)) is the RCK C-terminal domain. 4 consecutive transmembrane segments (helical) span residues 352–374 (LADVNLLPLAIGLSLGLLLGAIP), 379–401 (GGTTMSLGFGGGPIIAGLILGAL), 422–444 (LGLALFLAGVGTSAGAGFRAALT), and 454–476 (GGLVITLASALLCAVIGMWVLRL).

Belongs to the AAE transporter (TC 2.A.81) family.

It is found in the cell membrane. This is an uncharacterized protein from Corynebacterium glutamicum (strain ATCC 13032 / DSM 20300 / JCM 1318 / BCRC 11384 / CCUG 27702 / LMG 3730 / NBRC 12168 / NCIMB 10025 / NRRL B-2784 / 534).